Consider the following 352-residue polypeptide: D-alanine--D-alanine ligase (352 aa).

An ATP-grasp domain is found at 133–342 (KTVFAAAGLP…FPKLVDRLIQ (210 aa)). 169 to 224 (DETIGYPNFVKPANLGSSVGISKVRSRLELEAALDSAASFDRRIVVEAGVVAREVE) provides a ligand contact to ATP. Asp295, Glu309, and Asn311 together coordinate Mg(2+).

Belongs to the D-alanine--D-alanine ligase family. It depends on Mg(2+) as a cofactor. Requires Mn(2+) as cofactor.

Its subcellular location is the cytoplasm. It carries out the reaction 2 D-alanine + ATP = D-alanyl-D-alanine + ADP + phosphate + H(+). Its pathway is cell wall biogenesis; peptidoglycan biosynthesis. Its function is as follows. Cell wall formation. This Acaryochloris marina (strain MBIC 11017) protein is D-alanine--D-alanine ligase.